Reading from the N-terminus, the 333-residue chain is MSVSNPPSSGKPLKLRVNKDSEGYLSLVTESGEVYKCPICGNDKFVYNYERGEAVCIVCGAVVQEQLLDLGPEWRAFTSEEKGQRARTGAPLTRLISEALTTVIDWRDKDVSGKELDIKRKLEVIRLRKWQTRARVQTSYERNFIQAAQELERLRSAMGIPRPCIEQALEIYRQALEKELVRGRSVEAMAAAALYMACRMMKMPRPLDELVRYTKASRREVARCYRLLLRELNVKVPISDPILYISRIAEQLKLSGEVVKTAIDILQKAKKAGITAGKDPAGLAAAAVYIASLMHGDNRTQKDFAVAAGVTEVTVRNRYKELAKALNIKVPVK.

The TFIIB-type zinc-finger motif lies at Glu-33–Gln-64. Residues Cys-37, Cys-40, Cys-56, and Cys-59 each contribute to the Zn(2+) site. 2 consecutive repeat copies span residues Gln-149–Leu-232 and Leu-243–Lys-324.

Belongs to the TFIIB family.

Stabilizes TBP binding to an archaeal box-A promoter. Also responsible for recruiting RNA polymerase II to the pre-initiation complex (DNA-TBP-TFIIB). The chain is Transcription initiation factor IIB from Pyrobaculum aerophilum (strain ATCC 51768 / DSM 7523 / JCM 9630 / CIP 104966 / NBRC 100827 / IM2).